Here is a 254-residue protein sequence, read N- to C-terminus: Small ribosomal subunit protein uS2 (254 aa).

The protein belongs to the universal ribosomal protein uS2 family.

The protein is Small ribosomal subunit protein uS2 of Legionella pneumophila subsp. pneumophila (strain Philadelphia 1 / ATCC 33152 / DSM 7513).